The sequence spans 350 residues: Nuclear pore complex-interacting protein family member A1 (350 aa).

Positions Lys-306–Asp-325 are disordered.

Belongs to the NPIP family. May associate with the nuclear pore complex. As to expression, widely expressed.

The protein resides in the nucleus. It localises to the nuclear pore complex. It is found in the nucleus membrane. The protein is Nuclear pore complex-interacting protein family member A1 (NPIPA1) of Homo sapiens (Human).